We begin with the raw amino-acid sequence, 98 residues long: VQ motif-containing protein 1 (98 aa).

A VQ motif is present at residues 27 to 36; sequence FKTIVQELTG.

As to quaternary structure, interacts with WRKY33.

Its subcellular location is the nucleus. In terms of biological role, may modulate WRKY transcription factor activities. This Arabidopsis thaliana (Mouse-ear cress) protein is VQ motif-containing protein 1.